Here is a 137-residue protein sequence, read N- to C-terminus: Large ribosomal subunit protein uL14 (137 aa).

It belongs to the universal ribosomal protein uL14 family. In terms of assembly, part of the 50S ribosomal subunit. Forms a cluster with proteins L3 and L24e, part of which may contact the 16S rRNA in 2 intersubunit bridges.

Functionally, binds to 23S rRNA. Forms part of two intersubunit bridges in the 70S ribosome. This Ignicoccus hospitalis (strain KIN4/I / DSM 18386 / JCM 14125) protein is Large ribosomal subunit protein uL14.